The chain runs to 894 residues: Alpha-actinin-2 (894 aa).

Residues 1–254 (MNQIEPGVQY…IMTYVSCFYH (254 aa)) are actin-binding. Calponin-homology (CH) domains lie at 38–142 (KQQR…LRFA) and 151–257 (TSAK…HAFA). T237 is modified (phosphothreonine). Spectrin repeat units follow at residues 281–391 (RLME…WLLN), 401–506 (HLAE…ALER), 516–627 (QLHL…SLQE), and 637–740 (RLRR…EVET). 2 EF-hand domains span residues 753–788 (EQMNEFRASFNHFDRRKNGLMDHEDFRACLISMGYD) and 789–824 (LGEAEFARIMTLVDPNGQGTVTFQSFIDFMTRETAD). 6 residues coordinate Ca(2+): D766, N770, D777, D802, N804, and T808.

This sequence belongs to the alpha-actinin family. In terms of assembly, homodimer; antiparallel. Also forms heterodimers with ACTN3. Interacts with ADAM12, MYOZ1, MYOZ2 and MYOZ3. Interacts via its C-terminal region with the LDB3 PDZ domain. Interacts with XIRP2. Interacts with DST (via N-terminus). Interacts with PARVB. Interacts with SYNPO2. Post-translationally, ubiquitinated by FBXL22, leading to proteasomal degradation.

The protein localises to the cytoplasm. Its subcellular location is the myofibril. It localises to the sarcomere. It is found in the z line. Its function is as follows. F-actin cross-linking protein which is thought to anchor actin to a variety of intracellular structures. This is a bundling protein. This Mus musculus (Mouse) protein is Alpha-actinin-2 (Actn2).